The chain runs to 182 residues: UPF0397 protein VV2_1534 (182 aa).

5 helical membrane-spanning segments follow: residues 8–28 (VVVI…MFGI), 41–61 (AVLA…VGFI), 72–92 (WGVW…IGLF), 110–130 (FSLF…CSAF), and 146–166 (QLTI…YFIL).

It belongs to the UPF0397 family.

Its subcellular location is the cell membrane. The protein is UPF0397 protein VV2_1534 of Vibrio vulnificus (strain CMCP6).